The sequence spans 546 residues: Chaperonin GroEL (546 aa).

ATP-binding positions include 30 to 33 (TLGP), lysine 51, 87 to 91 (DGTTT), glycine 415, 479 to 481 (NAA), and aspartate 495.

The protein belongs to the chaperonin (HSP60) family. Forms a cylinder of 14 subunits composed of two heptameric rings stacked back-to-back. Interacts with the co-chaperonin GroES.

The protein localises to the cytoplasm. The enzyme catalyses ATP + H2O + a folded polypeptide = ADP + phosphate + an unfolded polypeptide.. In terms of biological role, together with its co-chaperonin GroES, plays an essential role in assisting protein folding. The GroEL-GroES system forms a nano-cage that allows encapsulation of the non-native substrate proteins and provides a physical environment optimized to promote and accelerate protein folding. The sequence is that of Chaperonin GroEL from Stutzerimonas stutzeri (strain A1501) (Pseudomonas stutzeri).